A 340-amino-acid polypeptide reads, in one-letter code: Ketol-acid reductoisomerase (NADP(+)) (340 aa).

Residues 3 to 183 form the KARI N-terminal Rossmann domain; sequence INVFYDKDCN…GGGRTGIIET (181 aa). NADP(+)-binding positions include 26–29, arginine 49, serine 54, and 84–87; these read FGSQ and DENQ. The active site involves histidine 109. Position 135 (glycine 135) interacts with NADP(+). In terms of domain architecture, KARI C-terminal knotted spans 184–329; sequence TFKDETETDL…VKLRNMMPWI (146 aa). Mg(2+) is bound by residues aspartate 192, glutamate 196, glutamate 228, and glutamate 232. Substrate is bound at residue serine 253.

The protein belongs to the ketol-acid reductoisomerase family. Mg(2+) serves as cofactor.

The catalysed reaction is (2R)-2,3-dihydroxy-3-methylbutanoate + NADP(+) = (2S)-2-acetolactate + NADPH + H(+). It carries out the reaction (2R,3R)-2,3-dihydroxy-3-methylpentanoate + NADP(+) = (S)-2-ethyl-2-hydroxy-3-oxobutanoate + NADPH + H(+). It participates in amino-acid biosynthesis; L-isoleucine biosynthesis; L-isoleucine from 2-oxobutanoate: step 2/4. Its pathway is amino-acid biosynthesis; L-valine biosynthesis; L-valine from pyruvate: step 2/4. Involved in the biosynthesis of branched-chain amino acids (BCAA). Catalyzes an alkyl-migration followed by a ketol-acid reduction of (S)-2-acetolactate (S2AL) to yield (R)-2,3-dihydroxy-isovalerate. In the isomerase reaction, S2AL is rearranged via a Mg-dependent methyl migration to produce 3-hydroxy-3-methyl-2-ketobutyrate (HMKB). In the reductase reaction, this 2-ketoacid undergoes a metal-dependent reduction by NADPH to yield (R)-2,3-dihydroxy-isovalerate. This Aliarcobacter butzleri (strain RM4018) (Arcobacter butzleri) protein is Ketol-acid reductoisomerase (NADP(+)).